Reading from the N-terminus, the 485-residue chain is PTS system arbutin-, cellobiose-, and salicin-specific EIIBC component (485 aa).

A PTS EIIB type-1 domain is found at 1 to 88 (MAKNYAALAR…VSLLPGDMQP (88 aa)). Cys28 functions as the Phosphocysteine intermediate; for EIIB activity in the catalytic mechanism. 10 helical membrane passes run 102–122 (IGAGILDALIGTMSPLIPAII), 147–167 (LTILNVIGDGAFFFLPLMVAA), 177–197 (MSLAIAIAGVLVHPSFIELMA), 207–227 (FALIPVTAVKYTYTVIPALVM), 254–274 (LIVLIAAPLAILLIGPIGIWI), 285–305 (IHGYLGWLSVAIMGALWPLLV), 330–350 (VMPSEIGANLSLGGSSLAVAW), 363–383 (AAAASAIMAGISEPALYGVAI), 389–409 (LIASLISGFICGAVAGMAGLA), and 433–453 (IVWVFAVMALAVVLSFILTLL). The 363-residue stretch at 108–470 (DALIGTMSPL…VEEAAAQARK (363 aa)) folds into the PTS EIIC type-1 domain.

It localises to the cell inner membrane. Functionally, the phosphoenolpyruvate-dependent sugar phosphotransferase system (sugar PTS), a major carbohydrate active -transport system, catalyzes the phosphorylation of incoming sugar substrates concomitantly with their translocation across the cell membrane. This system is involved in arbutin, cellobiose, and salicin transport. The polypeptide is PTS system arbutin-, cellobiose-, and salicin-specific EIIBC component (ascF) (Escherichia coli (strain K12)).